The sequence spans 281 residues: Phosphonates import ATP-binding protein PhnC 2 (281 aa).

Positions leucine 4–glutamate 238 constitute an ABC transporter domain. Residue glycine 35 to serine 42 coordinates ATP. A disordered region spans residues alanine 243–serine 281. The span at threonine 244–serine 255 shows a compositional bias: low complexity.

It belongs to the ABC transporter superfamily. Phosphonates importer (TC 3.A.1.9.1) family. In terms of assembly, the complex is composed of two ATP-binding proteins (PhnC), two transmembrane proteins (PhnE) and a solute-binding protein (PhnD).

The protein localises to the cell membrane. It catalyses the reaction phosphonate(out) + ATP + H2O = phosphonate(in) + ADP + phosphate + H(+). In terms of biological role, part of the ABC transporter complex PhnCDE involved in phosphonates import. Responsible for energy coupling to the transport system. The sequence is that of Phosphonates import ATP-binding protein PhnC 2 from Haloquadratum walsbyi (strain DSM 16790 / HBSQ001).